A 131-amino-acid polypeptide reads, in one-letter code: L-ectoine synthase (131 aa).

This sequence belongs to the ectoine synthase family.

The enzyme catalyses (2S)-4-acetamido-2-aminobutanoate = L-ectoine + H2O. It participates in amine and polyamine biosynthesis; ectoine biosynthesis; L-ectoine from L-aspartate 4-semialdehyde: step 3/3. In terms of biological role, catalyzes the circularization of gamma-N-acetyl-alpha,gamma-diaminobutyric acid (ADABA) to ectoine (1,4,5,6-tetrahydro-2-methyl-4-pyrimidine carboxylic acid), which is an excellent osmoprotectant. In Wolinella succinogenes (strain ATCC 29543 / DSM 1740 / CCUG 13145 / JCM 31913 / LMG 7466 / NCTC 11488 / FDC 602W) (Vibrio succinogenes), this protein is L-ectoine synthase.